Consider the following 297-residue polypeptide: N-acetylmuramic acid 6-phosphate etherase (297 aa).

Residues 56-219 (AIEAFNKGGR…STISMIGIGK (164 aa)) form the SIS domain. Glu-84 functions as the Proton donor in the catalytic mechanism. Glu-115 is an active-site residue.

This sequence belongs to the GCKR-like family. MurNAc-6-P etherase subfamily. As to quaternary structure, homodimer.

It catalyses the reaction N-acetyl-D-muramate 6-phosphate + H2O = N-acetyl-D-glucosamine 6-phosphate + (R)-lactate. The protein operates within amino-sugar metabolism; N-acetylmuramate degradation. Specifically catalyzes the cleavage of the D-lactyl ether substituent of MurNAc 6-phosphate, producing GlcNAc 6-phosphate and D-lactate. This Lactococcus lactis subsp. cremoris (strain SK11) protein is N-acetylmuramic acid 6-phosphate etherase.